Reading from the N-terminus, the 565-residue chain is Bicyclogermacrene synthase (565 aa).

Residues Asp-317, Asp-321, Asp-461, and Glu-469 each coordinate Mg(2+). The DDXXD motif motif lies at 317-321 (DDTFD).

It belongs to the terpene synthase family. Mg(2+) is required as a cofactor.

The enzyme catalyses (2E,6E)-farnesyl diphosphate = bicyclogermacrene + diphosphate. It functions in the pathway secondary metabolite biosynthesis; terpenoid biosynthesis. Functionally, sesquiterpene synthase converting farnesyl diphosphate to bicyclogermacrene as the major product. The chain is Bicyclogermacrene synthase from Phyla dulcis (Aztec sweet herb).